The sequence spans 211 residues: Type II secretion system protein J (211 aa).

Residues 1-7 (MRPRAAG) constitute a propeptide, leader sequence. Phe8 carries the post-translational modification N-methylphenylalanine. The chain crosses the membrane as a helical span at residues 8 to 28 (FTLIEVLLATMLLVGGLALAF).

Belongs to the GSP J family.

Its subcellular location is the membrane. In terms of biological role, involved in a type II secretion system (T2SS, formerly general secretion pathway, GSP) for the export of proteins. In Xanthomonas campestris pv. campestris (strain ATCC 33913 / DSM 3586 / NCPPB 528 / LMG 568 / P 25), this protein is Type II secretion system protein J (xpsJ).